Reading from the N-terminus, the 164-residue chain is Class I hydrophobin rodA (164 aa).

An N-terminal signal peptide occupies residues 1 to 18; sequence MRFSISALVLGLAATVYA. Asparagine 50 is a glycosylation site (N-linked (GlcNAc...) asparagine). Intrachain disulfides connect cysteine 60–cysteine 138, cysteine 68–cysteine 132, cysteine 69–cysteine 109, and cysteine 139–cysteine 157.

The protein belongs to the fungal hydrophobin family. As to quaternary structure, self-assembles to form functional amyloid fibrils called rodlets. Self-assembly into fibrillar rodlets occurs spontaneously at hydrophobic:hydrophilic interfaces and the rodlets further associate laterally to form amphipathic monolayers.

It localises to the secreted. It is found in the cell wall. Aerial growth, conidiation, and dispersal of filamentous fungi in the environment rely upon a capability of their secreting small amphipathic proteins called hydrophobins (HPBs) with low sequence identity. Class I can self-assemble into an outermost layer of rodlet bundles on aerial cell surfaces, conferring cellular hydrophobicity that supports fungal growth, development and dispersal; whereas Class II form highly ordered films at water-air interfaces through intermolecular interactions but contribute nothing to the rodlet structure. RodA is a class I hydrophobin involved in the cell surface hydrophobicity and conidiation under aerial conditions. The surface rodlet layer of the conidial cell wall makes airborne conidia of filamentous fungi inert to both innate and adaptive immunity. The chain is Class I hydrophobin rodA from Penicillium camembertii.